Here is a 193-residue protein sequence, read N- to C-terminus: Thymidine kinase (193 aa).

ATP-binding positions include 16 to 23 and 89 to 92; these read GPMFSGKS and DEIQ. The active-site Proton acceptor is Glu-90. The Zn(2+) site is built by Cys-146, Cys-149, Cys-184, and Cys-187.

The protein belongs to the thymidine kinase family. Homotetramer.

Its subcellular location is the cytoplasm. It catalyses the reaction thymidine + ATP = dTMP + ADP + H(+). This Thermoanaerobacter pseudethanolicus (strain ATCC 33223 / 39E) (Clostridium thermohydrosulfuricum) protein is Thymidine kinase.